Consider the following 32-residue polypeptide: C-reactive protein (32 aa).

The region spanning 2–32 is the Pentraxin (PTX) domain; that stretch reads VIKTLVFQSESNNSFVELIPMKPLNLRAFXL.

It belongs to the pentraxin family. Homopentamer. Pentraxin (or pentaxin) have a discoid arrangement of 5 non-covalently bound subunits. Glycosylated.

Its subcellular location is the secreted. In terms of biological role, displays several functions associated with host defense: it promotes agglutination, bacterial capsular swelling, phagocytosis, and complement fixation through its calcium-dependent binding to phosphorylcholine. The sequence is that of C-reactive protein from Pleuronectes platessa (European plaice).